A 154-amino-acid polypeptide reads, in one-letter code: Large ribosomal subunit protein uL30 (154 aa).

The protein belongs to the universal ribosomal protein uL30 family. As to quaternary structure, part of the 50S ribosomal subunit.

This chain is Large ribosomal subunit protein uL30, found in Methanococcus maripaludis (strain DSM 14266 / JCM 13030 / NBRC 101832 / S2 / LL).